Reading from the N-terminus, the 217-residue chain is Ribosomal RNA small subunit methyltransferase G (217 aa).

Residues Gly-85, Leu-90, 135–136 (IE), and Arg-149 contribute to the S-adenosyl-L-methionine site.

The protein belongs to the methyltransferase superfamily. RNA methyltransferase RsmG family.

Its subcellular location is the cytoplasm. The catalysed reaction is guanosine(527) in 16S rRNA + S-adenosyl-L-methionine = N(7)-methylguanosine(527) in 16S rRNA + S-adenosyl-L-homocysteine. Its function is as follows. Specifically methylates the N7 position of guanine in position 527 of 16S rRNA. The sequence is that of Ribosomal RNA small subunit methyltransferase G from Acidiphilium cryptum (strain JF-5).